A 119-amino-acid polypeptide reads, in one-letter code: Protein Wnt-4 (119 aa).

A lipid anchor (O-palmitoleoyl serine; by PORCN) is attached at serine 1. Cystine bridges form between cysteine 69-cysteine 100 and cysteine 85-cysteine 95. Residue asparagine 86 is glycosylated (N-linked (GlcNAc...) asparagine).

It belongs to the Wnt family. Post-translationally, palmitoleoylation is required for efficient binding to frizzled receptors. Depalmitoleoylation leads to Wnt signaling pathway inhibition.

The protein resides in the secreted. It localises to the extracellular space. The protein localises to the extracellular matrix. In terms of biological role, ligand for members of the frizzled family of seven transmembrane receptors. Plays an important role in embryonic development. This Sceloporus occidentalis (Western fence lizard) protein is Protein Wnt-4 (WNT-4).